The chain runs to 216 residues: MOB kinase activator 1B (216 aa).

An N-acetylserine modification is found at Ser-2. Residues Thr-12 and Thr-35 each carry the phosphothreonine; by STK4/MST1 modification. Cys-79, Cys-84, His-161, and His-166 together coordinate Zn(2+).

Belongs to the MOB1/phocein family. As to quaternary structure, binds STK38L. Interacts with LATS1 and LATS2. In terms of processing, phosphorylated by STK3/MST2 and STK4/MST1 and this phosphorylation enhances its binding to LATS1. In terms of tissue distribution, adrenal gland, bone marrow, brain, lung, placenta, prostate, salivary gland, skeletal muscle, testis, thymus, thyroid gland, uterus, colon with mucosa, fetal brain and fetal liver.

The protein localises to the cytoplasm. It is found in the nucleus. Its function is as follows. Activator of LATS1/2 in the Hippo signaling pathway which plays a pivotal role in organ size control and tumor suppression by restricting proliferation and promoting apoptosis. The core of this pathway is composed of a kinase cascade wherein STK3/MST2 and STK4/MST1, in complex with its regulatory protein SAV1, phosphorylates and activates LATS1/2 in complex with its regulatory protein MOB1, which in turn phosphorylates and inactivates YAP1 oncoprotein and WWTR1/TAZ. Phosphorylation of YAP1 by LATS1/2 inhibits its translocation into the nucleus to regulate cellular genes important for cell proliferation, cell death, and cell migration. Stimulates the kinase activity of STK38L. The chain is MOB kinase activator 1B from Homo sapiens (Human).